The primary structure comprises 705 residues: UvrABC system protein C (705 aa).

Residues 16 to 95 form the GIY-YIG domain; it reads ETPGVYRFRD…IKQFDPRFNV (80 aa). A UVR domain is found at 208-243; sequence GRYLRRLEREMQQAAQAQEYERAARLRDDIGALRRA. A compositionally biased stretch (low complexity) spans 315–332; the sequence is AASTGTAGSTVPTTTAGS. Disordered stretches follow at residues 315–335 and 683–705; these read AASTGTAGSTVPTTTAGSQGE and RADAPAPVVDPRTGEILDTETVS.

The protein belongs to the UvrC family. Interacts with UvrB in an incision complex.

It localises to the cytoplasm. In terms of biological role, the UvrABC repair system catalyzes the recognition and processing of DNA lesions. UvrC both incises the 5' and 3' sides of the lesion. The N-terminal half is responsible for the 3' incision and the C-terminal half is responsible for the 5' incision. The sequence is that of UvrABC system protein C from Frankia casuarinae (strain DSM 45818 / CECT 9043 / HFP020203 / CcI3).